The primary structure comprises 460 residues: ATP synthase subunit beta (460 aa).

150–157 (GGAGVGKT) contacts ATP.

Belongs to the ATPase alpha/beta chains family. F-type ATPases have 2 components, CF(1) - the catalytic core - and CF(0) - the membrane proton channel. CF(1) has five subunits: alpha(3), beta(3), gamma(1), delta(1), epsilon(1). CF(0) has three main subunits: a(1), b(2) and c(9-12). The alpha and beta chains form an alternating ring which encloses part of the gamma chain. CF(1) is attached to CF(0) by a central stalk formed by the gamma and epsilon chains, while a peripheral stalk is formed by the delta and b chains.

It is found in the cell inner membrane. The catalysed reaction is ATP + H2O + 4 H(+)(in) = ADP + phosphate + 5 H(+)(out). Its function is as follows. Produces ATP from ADP in the presence of a proton gradient across the membrane. The catalytic sites are hosted primarily by the beta subunits. This chain is ATP synthase subunit beta, found in Yersinia enterocolitica serotype O:8 / biotype 1B (strain NCTC 13174 / 8081).